Consider the following 239-residue polypeptide: Cyclo(L-leucyl-L-phenylalanyl) synthase (239 aa).

The Nucleophile role is filled by S37. Substrate contacts are provided by residues N40, 178 to 182 (YVLAE), and Y202.

The protein belongs to the CDPS family. Monomer.

It catalyses the reaction L-phenylalanyl-tRNA(Phe) + L-leucyl-tRNA(Leu) = cyclo(L-phenylalanyl-L-leucyl) + tRNA(Phe) + tRNA(Leu) + H(+). Involved in the biosynthesis of albonoursin (cyclo[(alpha,beta-dehydro-Phe)-(alpha,beta-dehydro-Leu)]), an antibacterial peptide. It uses activated amino acids in the form of aminoacyl-tRNAs (aa-tRNAs) as substrates to catalyze the ATP-independent formation of cyclodipeptides which are intermediates in diketopiperazine (DKP) biosynthetic pathways. Catalyzes the formation of cyclo(L-Phe-L-Leu) (cFL) as major products from L-L-phenylalanyl-tRNA(Phe) and L-leucyl-tRNA(Leu). AlbC can also incorporate various nonpolar residues, such as L-phenylalanine, L-leucine, L-tyrosine and L-methionine, and to a much lesser extent L-alanine and L-valine, into cyclodipeptides. Indeed, ten possible cyclodipeptides composed of L-phenylalanine, L-leucine, L-tyrosine and L-methionine are all synthesized to detectable amounts by AlbC. This Streptomyces noursei (Streptomyces albulus) protein is Cyclo(L-leucyl-L-phenylalanyl) synthase (albC).